We begin with the raw amino-acid sequence, 217 residues long: Ras-related protein Rab-19 (217 aa).

GTP contacts are provided by Ser26, Val28, Gly29, Lys30, Thr31, Cys32, Tyr42, Ser43, Glu44, Ser45, and Thr49. Residue Thr31 participates in Mg(2+) binding. Positions 39–54 (SGVYSESQQNTIGVDF) match the Switch 1 motif. Mg(2+) is bound by residues Thr49 and Asp72. Residues 74-89 (AGQERFRTITQSYYRS) carry the Switch 2 motif. Gly75, Asn130, Lys131, Asp133, Ser161, Ala162, and Lys163 together coordinate GTP. 2 S-geranylgeranyl cysteine lipidation sites follow: Cys215 and Cys217. Cys217 bears the Cysteine methyl ester mark.

This sequence belongs to the small GTPase superfamily. Rab family. Mg(2+) serves as cofactor.

The protein resides in the cell membrane. It catalyses the reaction GTP + H2O = GDP + phosphate + H(+). Regulated by guanine nucleotide exchange factors (GEFs) which promote the exchange of bound GDP for free GTP. Regulated by GTPase activating proteins (GAPs) which increase the GTP hydrolysis activity. Inhibited by GDP dissociation inhibitors (GDIs). Functionally, the small GTPases Rab are key regulators of intracellular membrane trafficking, from the formation of transport vesicles to their fusion with membranes. Rabs cycle between an inactive GDP-bound form and an active GTP-bound form that is able to recruit to membranes different set of downstream effectors directly responsible for vesicle formation, movement, tethering and fusion. The chain is Ras-related protein Rab-19 from Rattus norvegicus (Rat).